The following is a 126-amino-acid chain: Methylglyoxal synthase (126 aa).

The MGS-like domain maps to 1 to 126; sequence MAGSKCLALI…AIKLLPTLEA (126 aa). Residues His-12, Lys-16, 38–41, and 59–60 each bind substrate; these read TGTT and SG. The active-site Proton donor/acceptor is Asp-65. A substrate-binding site is contributed by His-92.

This sequence belongs to the methylglyoxal synthase family.

The catalysed reaction is dihydroxyacetone phosphate = methylglyoxal + phosphate. Its function is as follows. Catalyzes the formation of methylglyoxal from dihydroxyacetone phosphate. This Rhizobium etli (strain ATCC 51251 / DSM 11541 / JCM 21823 / NBRC 15573 / CFN 42) protein is Methylglyoxal synthase.